The chain runs to 908 residues: MFGKLLTKVFGSRNDRTLKGLQKVVNKINALEADYEKLTDEQLKAKTAEFRERLAAGASLDSIMAEAFATVREASKRVFEMRHFDVQLLGGMVLDSNRIAEMRTGEGKTLTATLPAYLNALTGKGVHVITVNDYLARRDAENNRPLFEFLGLTVGINVAGLGQQDKKDAYNADITYGTNNEFGFDYLRDNMAFSPQERVQRPLHYALIDEVDSILIDEARTPLIISGAAEDSSELYIKINTLIPNLIRQDKEDSEEYVGEGDYTIDEKAKQVHFTERGQEKVENLLIERGMLAEGDSLYSAANISLLHHVNAALRAHTLFERDVDYIVQDGEVIIVDEHTGRTMPGRRWSEGLHQAVEAKEGVRIQNENQTLASITFQNYFRLYEKLAGMTGTADTEAFEFQHIYGLDTVVVPTNRPMVRKDMADLVYLTANEKYQAIIKDIKDCRERGQPVLVGTVSIEQSELLARLMVKEKIPHQVLNAKFHEKEAEIVAQAGRTGAVTIATNMAGRGTDIVLGGNWNMEIDALENPTPEQKAKIKADWQLRHDAVVAAGGLHILGTERHESRRIDNQLRGRAGRQGDAGSSRFYLSMEDSLMRIFASDRVSGMMKKLGMEEGEAIEHPWVSRAIENAQRKVEARNFDIRKQLLEFDDVANDQRQVVYAQRNELMDAESIADTIQNIQDDVISAVIDQYIPPQSVEELWDVPGLEQRLHQEFMLKLPIQEWLDKEDDLHEESLRERIITSWSDAYKAKEEMVGASVLRQFEKAVMLQTLDGLWKEHLAAMDHLRQGIHLRGYAQKNPKQEYKRESFELFQQLLNTLKHDVISVLSKVQVQAQSDVEEMEARRREEDAKIQRDYQHAAAEALVGGSDEDDAIAAHTPMIRDGDKVGRNDPCPCGSGRKYKQCHGKLS.

ATP-binding positions include Gln87, 105–109 (GEGKT), and Asp512. The tract at residues 866 to 908 (GSDEDDAIAAHTPMIRDGDKVGRNDPCPCGSGRKYKQCHGKLS) is disordered. The segment covering 879 to 888 (MIRDGDKVGR) has biased composition (basic and acidic residues). Zn(2+) is bound by residues Cys892, Cys894, Cys903, and His904. Positions 898 to 908 (RKYKQCHGKLS) are enriched in basic residues.

This sequence belongs to the SecA family. In terms of assembly, monomer and homodimer. Part of the essential Sec protein translocation apparatus which comprises SecA, SecYEG and auxiliary proteins SecDF-YajC and YidC. The cofactor is Zn(2+).

The protein localises to the cell inner membrane. The protein resides in the cytoplasm. It carries out the reaction ATP + H2O + cellular proteinSide 1 = ADP + phosphate + cellular proteinSide 2.. Its function is as follows. Part of the Sec protein translocase complex. Interacts with the SecYEG preprotein conducting channel. Has a central role in coupling the hydrolysis of ATP to the transfer of proteins into and across the cell membrane, serving both as a receptor for the preprotein-SecB complex and as an ATP-driven molecular motor driving the stepwise translocation of polypeptide chains across the membrane. In Shewanella oneidensis (strain ATCC 700550 / JCM 31522 / CIP 106686 / LMG 19005 / NCIMB 14063 / MR-1), this protein is Protein translocase subunit SecA.